The sequence spans 286 residues: Shikimate dehydrogenase (NADP(+)) (286 aa).

Shikimate is bound by residues 19 to 21 (SVS) and Thr66. Lys70 serves as the catalytic Proton acceptor. Residues Asn91 and Asp106 each contribute to the shikimate site. NADP(+) is bound by residues 130–134 (GAGGS) and Ala225. A shikimate-binding site is contributed by Tyr227. Gly248 contacts NADP(+).

It belongs to the shikimate dehydrogenase family. Homodimer.

The enzyme catalyses shikimate + NADP(+) = 3-dehydroshikimate + NADPH + H(+). Its pathway is metabolic intermediate biosynthesis; chorismate biosynthesis; chorismate from D-erythrose 4-phosphate and phosphoenolpyruvate: step 4/7. In terms of biological role, involved in the biosynthesis of the chorismate, which leads to the biosynthesis of aromatic amino acids. Catalyzes the reversible NADPH linked reduction of 3-dehydroshikimate (DHSA) to yield shikimate (SA). The protein is Shikimate dehydrogenase (NADP(+)) of Dehalococcoides mccartyi (strain CBDB1).